Consider the following 1577-residue polypeptide: Probable serine/threonine-protein kinase gdt9 (1577 aa).

The N-terminal stretch at 1–16 (MKTFLLIFLLICVCKG) is a signal peptide. The Extracellular portion of the chain corresponds to 17-966 (ITNITTPSIY…NNEDNHKKLV (950 aa)). Residues 967-987 (IALSVSIPVAALLVILCFGIF) traverse the membrane as a helical segment. The Cytoplasmic segment spans residues 988–1577 (ICYNNNKKNK…SLVKIFKRFN (590 aa)). A compositionally biased stretch (basic and acidic residues) spans 998–1014 (NETKGKDIETNTDKKDD). Disordered stretches follow at residues 998–1019 (NETK…NENE) and 1050–1128 (TLPP…FPTI). Residues 1050 to 1082 (TLPPQSTISIDTSPSSENTTFTESLTPKKSATV) show a composition bias toward polar residues. Over residues 1091–1115 (NSTNESTVSNSSSENNSDNNNNNNN) the composition is skewed to low complexity. The region spanning 1290–1573 (LDFDEICGQG…EIVFSLVKIF (284 aa)) is the Protein kinase domain. ATP contacts are provided by residues 1296–1304 (CGQGTYGMV) and Lys1317. Residue Asp1436 is the Proton acceptor of the active site.

It in the N-terminal section; belongs to the GDT family. The protein in the C-terminal section; belongs to the protein kinase superfamily. TKL Ser/Thr protein kinase family.

The protein resides in the membrane. It catalyses the reaction L-seryl-[protein] + ATP = O-phospho-L-seryl-[protein] + ADP + H(+). The catalysed reaction is L-threonyl-[protein] + ATP = O-phospho-L-threonyl-[protein] + ADP + H(+). The protein is Probable serine/threonine-protein kinase gdt9 (gdt9) of Dictyostelium discoideum (Social amoeba).